A 410-amino-acid chain; its full sequence is MSTTLLWFSSVIGYVIQTKCLSNIQSKKEISVGPNGTIATPETNGDNGNSSSLTFYLTFMYFASWLLLVPASRLWEKMRPMFVSDSDSNRNSQFDNNNSGSVTNEDVDTFSHVLDDPQPRIPAQQQKQKIISVATFKYVAKLTVLALIMIVADLTYNMALSLSPAFDVALMQNTAIFEIVTLLYGVCGISRKNYVFRNFLIMMNAVIGILIISYTKATCDMLAGKLSVNPNTGELSDPFLFDRLKGALICGLGALIMGPFAVLWNRWFCSNISKNENSAVVLVKQSTHMALIGIIGMVILLPFIPKFPSRESVESISLFYNDKSFWFSLLGSIIFGSLPSLISILELNRKAPAEYLTTCNLGAIIFMGLAEWVCEPTQTTIVRWEVIGYIMLTVSLLVLSVTLGEGKYHH.

An N-terminal signal peptide occupies residues 1–17 (MSTTLLWFSSVIGYVIQ). The Lumenal portion of the chain corresponds to 18-50 (TKCLSNIQSKKEISVGPNGTIATPETNGDNGNS). N35 and N49 each carry an N-linked (GlcNAc...) asparagine glycan. Residues 51–71 (SSLTFYLTFMYFASWLLLVPA) traverse the membrane as a helical segment. Over 72–141 (SRLWEKMRPM…SVATFKYVAK (70 aa)) the chain is Cytoplasmic. A helical membrane pass occupies residues 142-161 (LTVLALIMIVADLTYNMALS). The Lumenal portion of the chain corresponds to 162–167 (LSPAFD). Residues 168-187 (VALMQNTAIFEIVTLLYGVC) form a helical membrane-spanning segment. Residues 188-197 (GISRKNYVFR) lie on the Cytoplasmic side of the membrane. A helical transmembrane segment spans residues 198–217 (NFLIMMNAVIGILIISYTKA). Over 218–245 (TCDMLAGKLSVNPNTGELSDPFLFDRLK) the chain is Lumenal. The helical transmembrane segment at 246–265 (GALICGLGALIMGPFAVLWN) threads the bilayer. The Cytoplasmic segment spans residues 266-285 (RWFCSNISKNENSAVVLVKQ). The chain crosses the membrane as a helical span at residues 286–305 (STHMALIGIIGMVILLPFIP). The Lumenal segment spans residues 306 to 324 (KFPSRESVESISLFYNDKS). The helical transmembrane segment at 325 to 344 (FWFSLLGSIIFGSLPSLISI) threads the bilayer. The Cytoplasmic portion of the chain corresponds to 345-355 (LELNRKAPAEY). The helical transmembrane segment at 356 to 374 (LTTCNLGAIIFMGLAEWVC) threads the bilayer. At 375–385 (EPTQTTIVRWE) the chain is on the lumenal side. A helical membrane pass occupies residues 386 to 404 (VIGYIMLTVSLLVLSVTLG). The Cytoplasmic portion of the chain corresponds to 405–410 (EGKYHH).

In terms of assembly, heterodimer of CSH1 and CSG2, and SUR1 and CSG2.

It is found in the endoplasmic reticulum membrane. In terms of biological role, required for calcium regulation. May regulate calcium accumulation by a non-vacuole organelle. Also regulates the activity of CSH1 and SUR1 during mannosyl phosphorylinositol ceramide synthesis. The sequence is that of Mannosyl phosphorylinositol ceramide synthase regulatory protein CSG2 (CSG2) from Saccharomyces cerevisiae (strain ATCC 204508 / S288c) (Baker's yeast).